Reading from the N-terminus, the 457-residue chain is Ig mu chain C region (457 aa).

Residues 1 to 105 form a CH1 region; that stretch reads SSSAPLLFPL…GEKEKKVELQ (105 aa). A disulfide bridge links Cys27 with Cys89. Residues Asn45 and Asn113 are each glycosylated (N-linked (GlcNAc...) asparagine). The tract at residues 106–220 is CH2; sequence VTPELPPNVS…KNVSSVCMGD (115 aa). Cys136 and Cys200 are disulfide-bonded. N-linked (GlcNAc...) asparagine glycans are attached at residues Asn212, Asn276, and Asn283. The CH3 stretch occupies residues 221-326; it reads DTSTGISVFL…PLKQSLSRPK (106 aa). 2 disulfides stabilise this stretch: Cys248/Cys307 and Cys355/Cys417. Residues 327–457 form a CH4 region; the sequence is DVANDPPSVF…VLSDTASTCY (131 aa). N-linked (GlcNAc...) asparagine glycosylation occurs at Asn444.

This is Ig mu chain C region from Suncus murinus (Asian house shrew).